A 110-amino-acid polypeptide reads, in one-letter code: Hydrogenase maturation factor HypA (110 aa).

Ni(2+) is bound at residue His-2. Zn(2+) is bound by residues Cys-70, Cys-73, Cys-86, and Cys-89.

The protein belongs to the HypA/HybF family.

In terms of biological role, involved in the maturation of [NiFe] hydrogenases. Required for nickel insertion into the metal center of the hydrogenase. The protein is Hydrogenase maturation factor HypA of Geobacter sulfurreducens (strain ATCC 51573 / DSM 12127 / PCA).